The sequence spans 229 residues: MQGTADLSTSKLGTKKYWDELYALELENFRRNPQDTGDCWFSDSDAEQKMIDFLVDNIGAYRISENASVVDLGTGNGHMLFELHQTEFQGKLVGIDYSEESVKLASNIAEATGVDNFISFQQADIFSGDWKPGKYDIVLDKGTLDAISLSGMKINGKLDVVDVYAGVVERILKKDGIFLITSCNFTQDELVKIIETDNLKMWKTIKYPVFQFGGVQGATICSVAFVKQN.

This sequence belongs to the class I-like SAM-binding methyltransferase superfamily. EFM4 family.

It is found in the cytoplasm. The enzyme catalyses L-lysyl-[protein] + S-adenosyl-L-methionine = N(6)-methyl-L-lysyl-[protein] + S-adenosyl-L-homocysteine + H(+). It carries out the reaction N(6)-methyl-L-lysyl-[protein] + S-adenosyl-L-methionine = N(6),N(6)-dimethyl-L-lysyl-[protein] + S-adenosyl-L-homocysteine + H(+). S-adenosyl-L-methionine-dependent protein-lysine N-methyltransferase that mono- and dimethylates elongation factor 1-alpha (TEF1 and TEF2) at 'Lys-316'. May play a role in intracellular transport. This chain is Protein-lysine N-methyltransferase EFM4, found in Saccharomyces cerevisiae (strain ATCC 204508 / S288c) (Baker's yeast).